Here is a 214-residue protein sequence, read N- to C-terminus: ATP phosphoribosyltransferase (214 aa).

It belongs to the ATP phosphoribosyltransferase family. Short subfamily. As to quaternary structure, heteromultimer composed of HisG and HisZ subunits.

Its subcellular location is the cytoplasm. It catalyses the reaction 1-(5-phospho-beta-D-ribosyl)-ATP + diphosphate = 5-phospho-alpha-D-ribose 1-diphosphate + ATP. It functions in the pathway amino-acid biosynthesis; L-histidine biosynthesis; L-histidine from 5-phospho-alpha-D-ribose 1-diphosphate: step 1/9. Functionally, catalyzes the condensation of ATP and 5-phosphoribose 1-diphosphate to form N'-(5'-phosphoribosyl)-ATP (PR-ATP). Has a crucial role in the pathway because the rate of histidine biosynthesis seems to be controlled primarily by regulation of HisG enzymatic activity. The chain is ATP phosphoribosyltransferase from Methylobacillus flagellatus (strain ATCC 51484 / DSM 6875 / VKM B-1610 / KT).